The primary structure comprises 453 residues: Bifunctional protein GlmU (453 aa).

The interval 1–231 (MERTCLAVIL…EIEMTGCNNR (231 aa)) is pyrophosphorylase. Residues 10-13 (LAAG), lysine 24, glutamine 77, 82-83 (GT), 105-107 (YGD), glycine 143, glutamate 157, asparagine 172, and asparagine 229 contribute to the UDP-N-acetyl-alpha-D-glucosamine site. Aspartate 107 lines the Mg(2+) pocket. Position 229 (asparagine 229) interacts with Mg(2+). Residues 232-252 (AELAVIERFWQERRRREMMLA) form a linker region. The interval 253 to 453 (GVTMIAPETV…AIKAAKRAKA (201 aa)) is N-acetyltransferase. UDP-N-acetyl-alpha-D-glucosamine-binding residues include arginine 318 and lysine 336. The active-site Proton acceptor is the histidine 348. Residues tyrosine 351 and asparagine 362 each contribute to the UDP-N-acetyl-alpha-D-glucosamine site. Acetyl-CoA contacts are provided by residues alanine 365, 371-372 (NY), serine 390, serine 408, and arginine 425.

In the N-terminal section; belongs to the N-acetylglucosamine-1-phosphate uridyltransferase family. The protein in the C-terminal section; belongs to the transferase hexapeptide repeat family. In terms of assembly, homotrimer. Mg(2+) serves as cofactor.

The protein localises to the cytoplasm. It carries out the reaction alpha-D-glucosamine 1-phosphate + acetyl-CoA = N-acetyl-alpha-D-glucosamine 1-phosphate + CoA + H(+). The catalysed reaction is N-acetyl-alpha-D-glucosamine 1-phosphate + UTP + H(+) = UDP-N-acetyl-alpha-D-glucosamine + diphosphate. It participates in nucleotide-sugar biosynthesis; UDP-N-acetyl-alpha-D-glucosamine biosynthesis; N-acetyl-alpha-D-glucosamine 1-phosphate from alpha-D-glucosamine 6-phosphate (route II): step 2/2. The protein operates within nucleotide-sugar biosynthesis; UDP-N-acetyl-alpha-D-glucosamine biosynthesis; UDP-N-acetyl-alpha-D-glucosamine from N-acetyl-alpha-D-glucosamine 1-phosphate: step 1/1. Its pathway is bacterial outer membrane biogenesis; LPS lipid A biosynthesis. Catalyzes the last two sequential reactions in the de novo biosynthetic pathway for UDP-N-acetylglucosamine (UDP-GlcNAc). The C-terminal domain catalyzes the transfer of acetyl group from acetyl coenzyme A to glucosamine-1-phosphate (GlcN-1-P) to produce N-acetylglucosamine-1-phosphate (GlcNAc-1-P), which is converted into UDP-GlcNAc by the transfer of uridine 5-monophosphate (from uridine 5-triphosphate), a reaction catalyzed by the N-terminal domain. This Rhizobium etli (strain CIAT 652) protein is Bifunctional protein GlmU.